A 219-amino-acid polypeptide reads, in one-letter code: Large ribosomal subunit protein uL3 (219 aa).

It belongs to the universal ribosomal protein uL3 family. Part of the 50S ribosomal subunit. Forms a cluster with proteins L14 and L19.

Its function is as follows. One of the primary rRNA binding proteins, it binds directly near the 3'-end of the 23S rRNA, where it nucleates assembly of the 50S subunit. This Chlamydia pneumoniae (Chlamydophila pneumoniae) protein is Large ribosomal subunit protein uL3.